Reading from the N-terminus, the 232-residue chain is Orotidine 5'-phosphate decarboxylase (232 aa).

Substrate contacts are provided by residues aspartate 13, lysine 35, 62-71 (DLKFHDIPNT), threonine 122, arginine 182, glutamine 191, glycine 211, and arginine 212. Residue lysine 64 is the Proton donor of the active site.

Belongs to the OMP decarboxylase family. Type 1 subfamily. Homodimer.

It carries out the reaction orotidine 5'-phosphate + H(+) = UMP + CO2. It participates in pyrimidine metabolism; UMP biosynthesis via de novo pathway; UMP from orotate: step 2/2. Functionally, catalyzes the decarboxylation of orotidine 5'-monophosphate (OMP) to uridine 5'-monophosphate (UMP). In Pseudomonas syringae pv. syringae (strain B728a), this protein is Orotidine 5'-phosphate decarboxylase.